A 383-amino-acid chain; its full sequence is uncharacterized protein (383 aa).

The chain crosses the membrane as a helical span at residues 6–26 (LFLFSCLYFIGGNLKALVLGI). In terms of domain architecture, ATP-grasp spans 131-303 (YKKLKNLGFN…LAMVLLNNKY (173 aa)).

It localises to the membrane. This is an uncharacterized protein from Methanocaldococcus jannaschii (strain ATCC 43067 / DSM 2661 / JAL-1 / JCM 10045 / NBRC 100440) (Methanococcus jannaschii).